The primary structure comprises 847 residues: Beta-hexosaminidase (847 aa).

Disulfide bonds link Cys-31–Cys-40, Cys-377–Cys-385, and Cys-484–Cys-530. The Proton donor role is filled by Glu-519.

The protein belongs to the glycosyl hydrolase 20 family.

The catalysed reaction is Hydrolysis of terminal non-reducing N-acetyl-D-hexosamine residues in N-acetyl-beta-D-hexosaminides.. It functions in the pathway glycan degradation; chitin degradation. Its function is as follows. Hydrolysis of terminal, non-reducing N-acetyl-beta-D-glucosamine residues in chitobiose and higher analogs, and in glycoproteins. The polypeptide is Beta-hexosaminidase (hex) (Vibrio vulnificus).